The sequence spans 319 residues: Phosphoribosylformylglycinamidine cyclo-ligase (319 aa).

This sequence belongs to the AIR synthase family.

Its subcellular location is the cytoplasm. It carries out the reaction 2-formamido-N(1)-(5-O-phospho-beta-D-ribosyl)acetamidine + ATP = 5-amino-1-(5-phospho-beta-D-ribosyl)imidazole + ADP + phosphate + H(+). Its pathway is purine metabolism; IMP biosynthesis via de novo pathway; 5-amino-1-(5-phospho-D-ribosyl)imidazole from N(2)-formyl-N(1)-(5-phospho-D-ribosyl)glycinamide: step 2/2. The sequence is that of Phosphoribosylformylglycinamidine cyclo-ligase from Sulfurisphaera tokodaii (strain DSM 16993 / JCM 10545 / NBRC 100140 / 7) (Sulfolobus tokodaii).